A 170-amino-acid polypeptide reads, in one-letter code: Myosin regulatory light chain 1 (170 aa).

Positions 1 to 13 are enriched in basic residues; sequence MSKAAKKKSSKKR. The interval 1-22 is disordered; it reads MSKAAKKKSSKKRSGSEAAQFD. 2 EF-hand domains span residues 24 to 59 and 93 to 128; these read KTIQ…MGQI and DPEA…KRGE. The Ca(2+) site is built by aspartate 37, asparagine 39, aspartate 41, and aspartate 48.

In terms of assembly, myosin is a hexamer of 2 heavy chains and 4 light chains (two regulatory light chains and two essential light chains).

In Caenorhabditis elegans, this protein is Myosin regulatory light chain 1 (mlc-1).